The sequence spans 224 residues: 7-cyano-7-deazaguanine synthase (224 aa).

Residue 9 to 19 participates in ATP binding; that stretch reads LSGGLDSATVL. Zn(2+) is bound by residues Cys-189, Cys-199, Cys-202, and Cys-205.

It belongs to the QueC family. The cofactor is Zn(2+).

It catalyses the reaction 7-carboxy-7-deazaguanine + NH4(+) + ATP = 7-cyano-7-deazaguanine + ADP + phosphate + H2O + H(+). Its pathway is purine metabolism; 7-cyano-7-deazaguanine biosynthesis. Functionally, catalyzes the ATP-dependent conversion of 7-carboxy-7-deazaguanine (CDG) to 7-cyano-7-deazaguanine (preQ(0)). The protein is 7-cyano-7-deazaguanine synthase of Ralstonia pickettii (strain 12J).